The following is a 139-amino-acid chain: D-ribose pyranase (139 aa).

Catalysis depends on His20, which acts as the Proton donor. Substrate contacts are provided by residues Asp28, His106, and 128-130 (YAN).

The protein belongs to the RbsD / FucU family. RbsD subfamily. As to quaternary structure, homodecamer.

It localises to the cytoplasm. The enzyme catalyses beta-D-ribopyranose = beta-D-ribofuranose. It functions in the pathway carbohydrate metabolism; D-ribose degradation; D-ribose 5-phosphate from beta-D-ribopyranose: step 1/2. Catalyzes the interconversion of beta-pyran and beta-furan forms of D-ribose. The protein is D-ribose pyranase of Haemophilus influenzae (strain PittGG).